A 470-amino-acid polypeptide reads, in one-letter code: Maltose fermentation regulatory protein YPR196W (470 aa).

The segment at residues 8–34 (CDCCRVRRVKCDRNRPCDRCRQRNLRC) is a DNA-binding region (zn(2)-C6 fungal-type). Residues 41-49 (RKRGPKSIG) carry the Nuclear localization signal motif.

Belongs to the MAL13 family.

It is found in the nucleus. Its function is as follows. May regulate the transcription of maltase and maltose permease genes. This Saccharomyces cerevisiae (strain ATCC 204508 / S288c) (Baker's yeast) protein is Maltose fermentation regulatory protein YPR196W.